The following is a 448-amino-acid chain: Asparagine--tRNA ligase (448 aa).

It belongs to the class-II aminoacyl-tRNA synthetase family. Homodimer.

Its subcellular location is the cytoplasm. The catalysed reaction is tRNA(Asn) + L-asparagine + ATP = L-asparaginyl-tRNA(Asn) + AMP + diphosphate + H(+). In Streptococcus thermophilus (strain ATCC BAA-491 / LMD-9), this protein is Asparagine--tRNA ligase.